Consider the following 720-residue polypeptide: Aminopeptidase RNPEPL1 (720 aa).

321–325 (VAMEN) provides a ligand contact to substrate. Histidine 348 provides a ligand contact to Zn(2+). Glutamate 349 functions as the Proton acceptor in the catalytic mechanism. Residues histidine 352 and glutamate 371 each coordinate Zn(2+). The interval 671 to 708 (GLGPSAEPSTEPSTDLGGAEADTNPDSPALLLGDEAPS) is disordered.

Belongs to the peptidase M1 family. Zn(2+) serves as cofactor.

The enzyme catalyses Release of N-terminal amino acids, preferentially methionine, from peptides and arylamides.. In terms of biological role, broad specificity aminopeptidase which preferentially hydrolyzes an N-terminal methionine, citrulline or glutamine. This is Aminopeptidase RNPEPL1 from Mus musculus (Mouse).